Reading from the N-terminus, the 259-residue chain is L-cysteine S-thiosulfotransferase subunit SoxA (259 aa).

Residues 1–23 form the signal peptide; sequence MRKLWFLPILLGAVGGVSLYAIA. In terms of domain architecture, Cytochrome c spans 50–135; it reads VYAEQGRDMF…SIATYVATLS (86 aa). Heme c contacts are provided by Cys-70, Cys-73, His-74, Cys-108, Cys-171, Cys-174, and His-175. A substrate-binding site is contributed by Arg-216. Residue Cys-220 coordinates heme c. The active-site Cysteine persulfide intermediate is the Cys-220.

Belongs to the SoxA family. As to quaternary structure, heterodimer of SoxA and SoxX. Requires heme c as cofactor. Post-translationally, cysteine persulfide at Cys-220.

It is found in the periplasm. The catalysed reaction is L-cysteinyl-[SoxY protein] + thiosulfate + 2 Fe(III)-[cytochrome c] = S-sulfosulfanyl-L-cysteinyl-[SoxY protein] + 2 Fe(II)-[cytochrome c] + 2 H(+). It catalyses the reaction S-sulfanyl-L-cysteinyl-[SoxY protein] + thiosulfate + 2 Fe(III)-[cytochrome c] = S-(2-sulfodisulfanyl)-L-cysteinyl-[SoxY protein] + 2 Fe(II)-[cytochrome c] + 2 H(+). In terms of biological role, C-type diheme cytochrome, which is part of the SoxAX cytochrome complex involved in sulfur oxidation. The SoxAX complex catalyzes the formation of a heterodisulfide bond between the conserved cysteine residue on a sulfur carrier SoxYZ complex subunit SoxY and thiosulfate or other inorganic sulfur substrates. This leads to the liberation of two electrons, which may be transferred from the SoxAX complex to another cytochrome c that then channels them into the respiratory electron transport chain. Some electrons may be used for reductive CO(2) fixation. The polypeptide is L-cysteine S-thiosulfotransferase subunit SoxA (Hydrogenobacter thermophilus (strain DSM 6534 / IAM 12695 / TK-6)).